Consider the following 229-residue polypeptide: Large ribosomal subunit protein uL3 (229 aa).

Position 151 is an N5-methylglutamine (Gln-151).

The protein belongs to the universal ribosomal protein uL3 family. Part of the 50S ribosomal subunit. Forms a cluster with proteins L14 and L19. Post-translationally, methylated by PrmB.

Functionally, one of the primary rRNA binding proteins, it binds directly near the 3'-end of the 23S rRNA, where it nucleates assembly of the 50S subunit. The polypeptide is Large ribosomal subunit protein uL3 (Paramagnetospirillum magneticum (strain ATCC 700264 / AMB-1) (Magnetospirillum magneticum)).